A 278-amino-acid polypeptide reads, in one-letter code: Shikimate dehydrogenase (NADP(+)) (278 aa).

Shikimate contacts are provided by residues S14–S16 and T61. K65 acts as the Proton acceptor in catalysis. Shikimate is bound by residues N86 and D102. NADP(+) contacts are provided by residues G127 to A131, N151 to K156, and M221. Y223 serves as a coordination point for shikimate. Residue G245 participates in NADP(+) binding.

Belongs to the shikimate dehydrogenase family. As to quaternary structure, homodimer.

The enzyme catalyses shikimate + NADP(+) = 3-dehydroshikimate + NADPH + H(+). It participates in metabolic intermediate biosynthesis; chorismate biosynthesis; chorismate from D-erythrose 4-phosphate and phosphoenolpyruvate: step 4/7. Functionally, involved in the biosynthesis of the chorismate, which leads to the biosynthesis of aromatic amino acids. Catalyzes the reversible NADPH linked reduction of 3-dehydroshikimate (DHSA) to yield shikimate (SA). The sequence is that of Shikimate dehydrogenase (NADP(+)) from Saccharophagus degradans (strain 2-40 / ATCC 43961 / DSM 17024).